A 326-amino-acid polypeptide reads, in one-letter code: ATP synthase gamma chain (326 aa).

It belongs to the ATPase gamma chain family. In terms of assembly, F-type ATPases have 2 components, CF(1) - the catalytic core - and CF(0) - the membrane proton channel. CF(1) has five subunits: alpha(3), beta(3), gamma(1), delta(1), epsilon(1). CF(0) has three main subunits: a, b and c.

Its subcellular location is the cell membrane. Produces ATP from ADP in the presence of a proton gradient across the membrane. The gamma chain is believed to be important in regulating ATPase activity and the flow of protons through the CF(0) complex. The chain is ATP synthase gamma chain from Rhodococcus opacus (strain B4).